A 373-amino-acid polypeptide reads, in one-letter code: Spermidine/putrescine import ATP-binding protein PotA (373 aa).

The ABC transporter domain occupies 6–236 (LSLSNLTKQF…PANLFTARFV (231 aa)). 38-45 (GPSGCGKT) contacts ATP.

It belongs to the ABC transporter superfamily. Spermidine/putrescine importer (TC 3.A.1.11.1) family. In terms of assembly, the complex is composed of two ATP-binding proteins (PotA), two transmembrane proteins (PotB and PotC) and a solute-binding protein (PotD).

It localises to the cell inner membrane. The enzyme catalyses ATP + H2O + polyamine-[polyamine-binding protein]Side 1 = ADP + phosphate + polyamineSide 2 + [polyamine-binding protein]Side 1.. Part of the ABC transporter complex PotABCD involved in spermidine/putrescine import. Responsible for energy coupling to the transport system. The sequence is that of Spermidine/putrescine import ATP-binding protein PotA from Marinobacter nauticus (strain ATCC 700491 / DSM 11845 / VT8) (Marinobacter aquaeolei).